We begin with the raw amino-acid sequence, 213 residues long: Ribosomal RNA small subunit methyltransferase G (213 aa).

S-adenosyl-L-methionine contacts are provided by residues Gly-77, Phe-82, Ile-130 to Glu-131, and Arg-146.

Belongs to the methyltransferase superfamily. RNA methyltransferase RsmG family.

The protein resides in the cytoplasm. The enzyme catalyses guanosine(527) in 16S rRNA + S-adenosyl-L-methionine = N(7)-methylguanosine(527) in 16S rRNA + S-adenosyl-L-homocysteine. Its function is as follows. Specifically methylates the N7 position of guanine in position 527 of 16S rRNA. This is Ribosomal RNA small subunit methyltransferase G from Bartonella tribocorum (strain CIP 105476 / IBS 506).